Here is a 726-residue protein sequence, read N- to C-terminus: Tripartite terminase subunit 1 (726 aa).

Residues 189–217 (CMKCYEELTLTPNQGKSLRRRLHGKFCNH) form a C3H1-type zinc finger. 626–633 (YNDVFGKR) contacts ATP.

The protein belongs to the herpesviridae TRM1 protein family. In terms of assembly, associates with TRM2 and TRM3 to form the tripartite terminase complex. Interacts with portal protein.

The protein localises to the host nucleus. Its function is as follows. Component of the molecular motor that translocates viral genomic DNA in empty capsid during DNA packaging. Forms a tripartite terminase complex together with TRM2 and TRM3 in the host cytoplasm. Once the complex reaches the host nucleus, it interacts with the capsid portal vertex. This portal forms a ring in which genomic DNA is translocated into the capsid. TRM1 carries an endonuclease activity that plays an important role for the cleavage of concatemeric viral DNA into unit length genomes. The polypeptide is Tripartite terminase subunit 1 (Homo sapiens (Human)).